Consider the following 399-residue polypeptide: L-2-hydroxyglutarate dehydrogenase (399 aa).

This sequence belongs to the L2HGDH family. The cofactor is FAD.

The enzyme catalyses (S)-2-hydroxyglutarate + A = 2-oxoglutarate + AH2. In terms of biological role, catalyzes the dehydrogenation of L-2-hydroxyglutarate (L2HG or(S)-2-hydroxyglutarate) to 2-oxoglutarate (alpha-ketoglutarate). Active in vitro with the artificial electron acceptor 2,6-dichlorophenolindophenol (DCPIP). Also displays a very low oxidase activity in vitro on L-2-hydroxyglutarate with O2 as the electron acceptor, but this activity is most likely not physiological. The polypeptide is L-2-hydroxyglutarate dehydrogenase (Indibacter alkaliphilus (strain CCUG 57479 / KCTC 22604 / LW1)).